Consider the following 339-residue polypeptide: DNA-directed RNA polymerase subunit alpha (339 aa).

Residues 1–233 (MVREEITGST…DLFLPFLHTE (233 aa)) are alpha N-terminal domain (alpha-NTD). An alpha C-terminal domain (alpha-CTD) region spans residues 264 to 339 (KKGIPLNCIF…IDLPKNKFSL (76 aa)).

The protein belongs to the RNA polymerase alpha chain family. In plastids the minimal PEP RNA polymerase catalytic core is composed of four subunits: alpha, beta, beta', and beta''. When a (nuclear-encoded) sigma factor is associated with the core the holoenzyme is formed, which can initiate transcription.

Its subcellular location is the plastid. It localises to the chloroplast. The enzyme catalyses RNA(n) + a ribonucleoside 5'-triphosphate = RNA(n+1) + diphosphate. Functionally, DNA-dependent RNA polymerase catalyzes the transcription of DNA into RNA using the four ribonucleoside triphosphates as substrates. The polypeptide is DNA-directed RNA polymerase subunit alpha (Zea mays (Maize)).